The sequence spans 469 residues: Acetyl-CoA decarbonylase/synthase complex subunit beta 1 (469 aa).

[Ni-Fe-S] cluster contacts are provided by C189, C192, C278, and C280.

The protein belongs to the CdhC family. In terms of assembly, monomer. The ACDS complex is made up of alpha, epsilon, beta, gamma and delta chains with a probable stoichiometry of (alpha(2)epsilon(2))(4)-beta(8)-(gamma(1)delta(1))(8) (Potential). [Ni-Fe-S] cluster serves as cofactor.

It catalyses the reaction Co(I)-[corrinoid Fe-S protein] + acetyl-CoA + H(+) = methyl-Co(III)-[corrinoid Fe-S protein] + CO + CoA. It participates in one-carbon metabolism; methanogenesis from acetate. In terms of biological role, part of a complex that catalyzes the reversible cleavage of acetyl-CoA, allowing growth on acetate as sole source of carbon and energy. The alpha-epsilon complex generates CO from CO(2), while the beta subunit (this protein) combines the CO with CoA and a methyl group to form acetyl-CoA. The methyl group, which is incorporated into acetyl-CoA, is transferred to the beta subunit by a corrinoid iron-sulfur protein (the gamma-delta complex). The polypeptide is Acetyl-CoA decarbonylase/synthase complex subunit beta 1 (cdhC1) (Methanosarcina mazei (strain ATCC BAA-159 / DSM 3647 / Goe1 / Go1 / JCM 11833 / OCM 88) (Methanosarcina frisia)).